The chain runs to 283 residues: Elongation factor Ts (283 aa).

The interval 80-83 (TDFV) is involved in Mg(2+) ion dislocation from EF-Tu.

The protein belongs to the EF-Ts family.

The protein resides in the cytoplasm. Its function is as follows. Associates with the EF-Tu.GDP complex and induces the exchange of GDP to GTP. It remains bound to the aminoacyl-tRNA.EF-Tu.GTP complex up to the GTP hydrolysis stage on the ribosome. The protein is Elongation factor Ts of Enterobacter sp. (strain 638).